Here is a 322-residue protein sequence, read N- to C-terminus: tRNA-dihydrouridine(16) synthase (322 aa).

Residues 8–10 and Q69 each bind FMN; that span reads PME. The Proton donor role is filled by C99. FMN contacts are provided by residues K140, 200 to 202, and 224 to 225; these read NGD and GR.

The protein belongs to the Dus family. DusC subfamily. The cofactor is FMN.

It carries out the reaction 5,6-dihydrouridine(16) in tRNA + NADP(+) = uridine(16) in tRNA + NADPH + H(+). It catalyses the reaction 5,6-dihydrouridine(16) in tRNA + NAD(+) = uridine(16) in tRNA + NADH + H(+). Catalyzes the synthesis of 5,6-dihydrouridine (D), a modified base found in the D-loop of most tRNAs, via the reduction of the C5-C6 double bond in target uridines. Specifically modifies U16 in tRNAs. This Cupriavidus necator (strain ATCC 17699 / DSM 428 / KCTC 22496 / NCIMB 10442 / H16 / Stanier 337) (Ralstonia eutropha) protein is tRNA-dihydrouridine(16) synthase.